The chain runs to 534 residues: MFSWVSKDARRKKEPELFQTVSEGLRQLYAQKLLPLEEHYRFHEFHSPALEDADFDNKPMVLLVGQYSTGKTTFIRHLIEQDFPGMRIGPEPTTDSFIAVMHGPTEGVVPGNALVVDPRRPFRKLNAFGNAFLNRFMCAQLPNPVLDSISIIDTPGILSGEKQRISRGYDFAAVLEWFAERVDRIILLFDAHKLDISDEFSEVIKALKNHEDKIRVVLNKADQIETQQLMRVYGALMWSLGKIINTPEVVRVYIGSFWSHPLLIPDNRKLFEAEEQDLFKDIQSLPRNAALRKLNDLIKRARLAKVHAYIISSLKKEMPNVFGKESKKKELVNNLGEIYQKIEREHQISPGDFPNLRKMQELLQTQDFSKFQALKPKLLDTVDDMLANDIARLMVMVRQEESLMPAQVVKGGAFDGTMNGPFGHGYGEGAGEGIDDVEWVVGKDKPTYDEIFYTLSPVNGKITGANAKKEMVKSKLPNTVLGKIWKLADVDRDGLLDDEEFALANHLIKVKLEGHELPADLPPHLVPPSKRRHE.

M1 bears the N-acetylmethionine mark. Residues 55–286 form the Dynamin-type G domain; the sequence is FDNKPMVLLV…DLFKDIQSLP (232 aa). A G1 motif region spans residues 65 to 72; the sequence is GQYSTGKT. An ATP-binding site is contributed by 65–72; the sequence is GQYSTGKT. The segment at 91-92 is G2 motif; sequence EP. The segment at 153–156 is G3 motif; sequence DTPG. A coiled-coil region spans residues 198–227; that stretch reads DEFSEVIKALKNHEDKIRVVLNKADQIETQ. The G4 motif stretch occupies residues 219–222; sequence NKAD. K220 contributes to the ATP binding site. I243 is a region of interest (G5 motif). Position 258 (W258) interacts with ATP. An EH domain is found at 444-532; that stretch reads DKPTYDEIFY…PHLVPPSKRR (89 aa). S456 bears the Phosphoserine mark. Positions 476–511 constitute an EF-hand domain; that stretch reads LPNTVLGKIWKLADVDRDGLLDDEEFALANHLIKVK. D489, D491, D493, and E500 together coordinate Ca(2+).

The protein belongs to the TRAFAC class dynamin-like GTPase superfamily. Dynamin/Fzo/YdjA family. EHD subfamily. Homooligomer, and heterooligomer with EHD2, EHD3 and EHD4, ATP-binding is required for heterooligomerization. Interacts (via EH domain) with MICALL1 (via NPF1 motif); the interaction is direct and recruits EHD1 to membranes. Interacts with RAB35; the interaction is indirect through MICALL1 and recruits EHD1 to membranes. Interacts (via EH domain) with PACSIN2 (via NPF motifs); regulates localization to tubular recycling endosome membranes. Interacts with PACSIN1. Interacts with RAB8A. Interacts with FER1L5 (via second C2 domain). Interacts with MYOF. Interacts with ZFYVE20. Interacts (via EH domain) with RAB11FIP2.

It is found in the recycling endosome membrane. The protein localises to the early endosome membrane. Its subcellular location is the cell membrane. The protein resides in the cell projection. It localises to the cilium membrane. Functionally, ATP- and membrane-binding protein that controls membrane reorganization/tubulation upon ATP hydrolysis. Acts in early endocytic membrane fusion and membrane trafficking of recycling endosomes. Recruited to endosomal membranes upon nerve growth factor stimulation, indirectly regulates neurite outgrowth. Plays a role in myoblast fusion. Involved in the unidirectional retrograde dendritic transport of endocytosed BACE1 and in efficient sorting of BACE1 to axons implicating a function in neuronal APP processing. Plays a role in the formation of the ciliary vesicle (CV), an early step in cilium biogenesis. Proposed to be required for the fusion of distal appendage vesicles (DAVs) to form the CV by recruiting SNARE complex component SNAP29. Is required for recruitment of transition zone proteins CEP290, RPGRIP1L, TMEM67 and B9D2, and of IFT20 following DAV reorganization before Rab8-dependent ciliary membrane extension. Required for the loss of CCP110 form the mother centriole essential for the maturation of the basal body during ciliogenesis. The polypeptide is EH domain-containing protein 1 (Bos taurus (Bovine)).